A 194-amino-acid chain; its full sequence is Peptidyl-tRNA hydrolase (194 aa).

Residue tyrosine 17 participates in tRNA binding. Histidine 22 serves as the catalytic Proton acceptor. Positions 68, 70, and 116 each coordinate tRNA.

It belongs to the PTH family. In terms of assembly, monomer.

Its subcellular location is the cytoplasm. The enzyme catalyses an N-acyl-L-alpha-aminoacyl-tRNA + H2O = an N-acyl-L-amino acid + a tRNA + H(+). Its function is as follows. Hydrolyzes ribosome-free peptidyl-tRNAs (with 1 or more amino acids incorporated), which drop off the ribosome during protein synthesis, or as a result of ribosome stalling. In terms of biological role, catalyzes the release of premature peptidyl moieties from peptidyl-tRNA molecules trapped in stalled 50S ribosomal subunits, and thus maintains levels of free tRNAs and 50S ribosomes. This Pseudomonas paraeruginosa (strain DSM 24068 / PA7) (Pseudomonas aeruginosa (strain PA7)) protein is Peptidyl-tRNA hydrolase.